The chain runs to 255 residues: Small ribosomal subunit protein eS1A (255 aa).

Basic residues predominate over residues 1–18 (MAVGKNKRLSKGKKGQKK). A disordered region spans residues 1–20 (MAVGKNKRLSKGKKGQKKRV). The residue at position 2 (Ala2) is an N-acetylalanine; partial. The residue at position 245 (Thr245) is a Phosphothreonine. Lys248 participates in a covalent cross-link: Glycyl lysine isopeptide (Lys-Gly) (interchain with G-Cter in ubiquitin). Thr254 carries the post-translational modification Phosphothreonine.

The protein belongs to the eukaryotic ribosomal protein eS1 family. As to quaternary structure, component of the small ribosomal subunit. Mature ribosomes consist of a small (40S) and a large (60S) subunit. The 40S subunit contains about 33 different proteins and 1 molecule of RNA (18S). The 60S subunit contains about 49 different proteins and 3 molecules of RNA (25S, 5.8S and 5S).

It is found in the cytoplasm. This Saccharomyces cerevisiae (strain RM11-1a) (Baker's yeast) protein is Small ribosomal subunit protein eS1A.